A 783-amino-acid chain; its full sequence is Serine/threonine-protein kinase SIK1 (783 aa).

Positions 27–278 (YDIERTLGKG…IAQIRQHRWM (252 aa)) constitute a Protein kinase domain. Residues 33-41 (LGKGNFAVV) and Lys-56 each bind ATP. Catalysis depends on Asp-149, which acts as the Proton acceptor. The residue at position 182 (Thr-182) is a Phosphothreonine; by LKB1 and GSK3-beta. The residue at position 186 (Ser-186) is a Phosphoserine; by autocatalysis. Residues 303–343 (DYDEQALGIMQTLGVDRQRTVESLQNSSYNHFAAIYYLLLE) form the UBA domain. A Phosphothreonine; by CaMK1 modification is found at Thr-322. Disordered stretches follow at residues 353–377 (CARP…VPQE) and 449–477 (RQGP…LAEV). Thr-473 bears the Phosphothreonine; by PKA mark. Ser-575 is subject to Phosphoserine; by PKA. An RK-rich region; required for cAMP responsiveness and nuclear localization region spans residues 583-612 (LKAFRQQLRKTTRTKGFLGLNKIKGLARQV). The tract at residues 619 to 643 (RASRGGLSPFHAPAQSPGLHGGAAG) is disordered.

Belongs to the protein kinase superfamily. CAMK Ser/Thr protein kinase family. AMPK subfamily. As to quaternary structure, interacts with ATP1A1. Interacts (when phosphorylated on Thr-182 and Ser-186) with YWHAZ. Interacts (when phosphorylated at Thr-473 and/or Ser-575) with 14-3-3 proteins; the interaction inhibits kinase activity towards TORCs. There is a cooperative effect of the phosphorylation sites in 14-3-3 binding as the interaction is stronger when both Thr-473 and Ser-575 are modified. It depends on Mg(2+) as a cofactor. In terms of processing, phosphorylated at Thr-182 by STK11/LKB1 in complex with STE20-related adapter-alpha (STRADA) pseudo kinase and CAB39, leading to its activation. Phosphorylation at Thr-182 promotes autophosphorylation at Ser-186, which is required for sustained activity. Autophosphorylation at Ser-186 is maintained by sequential phosphorylation at Thr-182 by GSK3-beta. GSK3-beta cannot initiate phosphorylation at Thr-182, it can only maintain it. Phosphorylation at Ser-575 in response to cAMP signaling promotes translocation to the cytoplasm. Phosphorylation at Thr-322 by CaMK1 following intracellular sodium concentration leads to activation.

It localises to the cytoplasm. The protein resides in the nucleus. It catalyses the reaction L-seryl-[protein] + ATP = O-phospho-L-seryl-[protein] + ADP + H(+). The enzyme catalyses L-threonyl-[protein] + ATP = O-phospho-L-threonyl-[protein] + ADP + H(+). With respect to regulation, activated by phosphorylation on Thr-182. Also activated by phosphorylation on Thr-322 in response to increases in intracellular sodium in parallel with elevations in intracellular calcium through the reversible sodium/calcium exchanger. Inhibited by phosphorylation at Thr-473 and Ser-575, probably by PKA, which triggers interaction with 14-3-3 proteins. Serine/threonine-protein kinase involved in various processes such as cell cycle regulation, gluconeogenesis and lipogenesis regulation, muscle growth and differentiation and tumor suppression. Phosphorylates HDAC4, HDAC5, PPME1, SREBF1, CRTC1/TORC1. Inhibits CREB activity by phosphorylating and inhibiting activity of TORCs, the CREB-specific coactivators, like CRTC2/TORC2 and CRTC3/TORC3 in response to cAMP signaling. Acts as a tumor suppressor and plays a key role in p53/TP53-dependent anoikis, a type of apoptosis triggered by cell detachment: required for phosphorylation of p53/TP53 in response to loss of adhesion and is able to suppress metastasis. Part of a sodium-sensing signaling network, probably by mediating phosphorylation of PPME1: following increases in intracellular sodium, SIK1 is activated by CaMK1 and phosphorylates PPME1 subunit of protein phosphatase 2A (PP2A), leading to dephosphorylation of sodium/potassium-transporting ATPase ATP1A1 and subsequent increase activity of ATP1A1. Acts as a regulator of muscle cells by phosphorylating and inhibiting class II histone deacetylases HDAC4 and HDAC5, leading to promote expression of MEF2 target genes in myocytes. Also required during cardiomyogenesis by regulating the exit of cardiomyoblasts from the cell cycle via down-regulation of CDKN1C/p57Kip2. Acts as a regulator of hepatic gluconeogenesis by phosphorylating and repressing the CREB-specific coactivators CRTC1/TORC1 and CRTC2/TORC2, leading to inhibit CREB activity. Also regulates hepatic lipogenesis by phosphorylating and inhibiting SREBF1. In concert with CRTC1/TORC1, regulates the light-induced entrainment of the circadian clock by attenuating PER1 induction; represses CREB-mediated transcription of PER1 by phosphorylating and deactivating CRTC1/TORC1. The sequence is that of Serine/threonine-protein kinase SIK1 (SIK1) from Homo sapiens (Human).